Consider the following 665-residue polypeptide: F-box/LRR-repeat protein 3 (665 aa).

In terms of domain architecture, F-box spans 11–60; that stretch reads KPFDLLSEELVFIILDLISPNPSDLKSFSLTCKSFYQLESKHRGSLKPLR. LRR repeat units follow at residues 61–81, 82–108, 109–134, 135–159, 160–185, 186–211, 214–235, 236–261, 262–287, 288–312, 313–338, 339–364, 365–390, 391–416, 419–440, 441–466, 467–492, 493–517, 518–543, 544–569, and 594–619; these read SDYL…DLTF, CPRV…DLSR, SGSF…DLSN, ATEM…KLGR, CKML…SLKW, CVGV…DLSY, ITGK…LLEG, CFGV…DASS, CQNL…DLSH, CSSV…IRLD, GCSV…SLSK, CVSV…DITC, CRKL…KMES, CSLV…DLTD, IDDE…KLGI, CLNI…DLYR, SVGI…NISY, CQDI…ESRG, CPNI…DLKK, CPSI…NVSD, and SSGL…KLHA.

The sequence is that of F-box/LRR-repeat protein 3 (FBL3) from Arabidopsis thaliana (Mouse-ear cress).